The following is a 1292-amino-acid chain: ABC multidrug transporter MDR5 (1292 aa).

The tract at residues 1–43 (MTEEPKPVTPVLRDGEAGLDTTAPTEAGSLGEEAPKKEADGIV) is disordered. Transmembrane regions (helical) follow at residues 79-99 (ICGF…TIIF) and 128-148 (LWFV…TICF). One can recognise an ABC transmembrane type-1 1 domain in the interval 81–370 (GFFAAVASGT…IAPTLGEFTK (290 aa)). An N-linked (GlcNAc...) asparagine glycan is attached at Asn-149. Helical transmembrane passes span 202–222 (VGTC…AFTQ), 226–246 (LTLP…ITVA), 314–334 (EFFI…KLLL), and 344–364 (ILTV…IAPT). The 246-residue stretch at 405-650 (LELSNAVFSY…KGQYWSLVNA (246 aa)) folds into the ABC transporter 1 domain. 440-447 (GASGSGKS) serves as a coordination point for ATP. The N-linked (GlcNAc...) asparagine glycan is linked to Asn-494. The interval 656-691 (ASDDSSSDTDKETDTQPAEILEKHATTKSTHSKVPH) is disordered. A compositionally biased stretch (basic and acidic residues) spans 663–680 (DTDKETDTQPAEILEKHA). A run of 2 helical transmembrane segments spans residues 720-740 (HWLF…AFPA) and 768-788 (LMFF…GFFL). An ABC transmembrane type-1 2 domain is found at 725–1012 (LLGGIASVVS…IFGFTMNTTK (288 aa)). An N-linked (GlcNAc...) asparagine glycan is attached at Asn-820. 4 helical membrane passes run 844–864 (IGLI…ALVT), 866–886 (WKLA…AGFI), 949–969 (IAMI…ALAF), and 986–1006 (FFVI…IFGF). 3 N-linked (GlcNAc...) asparagine glycosylation sites follow: Asn-1009, Asn-1031, and Asn-1052. One can recognise an ABC transporter 2 domain in the interval 1048–1285 (VEFRNVSFSY…KGRYFEMCKA (238 aa)). An ATP-binding site is contributed by 1083 to 1090 (GPSGCGKT).

The protein belongs to the ABC transporter superfamily. ABCB family. Multidrug resistance exporter (TC 3.A.1.201) subfamily.

It is found in the cell membrane. It catalyses the reaction itraconazole(in) + ATP + H2O = itraconazole(out) + ADP + phosphate + H(+). Its function is as follows. Pleiotropic ABC efflux transporter involved in the modulation susceptibility to itraconazole. This Trichophyton rubrum (strain ATCC MYA-4607 / CBS 118892) (Athlete's foot fungus) protein is ABC multidrug transporter MDR5.